Reading from the N-terminus, the 605-residue chain is Dihydrogeodin oxidase (605 aa).

The N-terminal stretch at 1 to 18 (MPSLKDWVVAGLVPMTIA) is a signal peptide. N-linked (GlcNAc...) asparagine glycans are attached at residues asparagine 27, asparagine 107, and asparagine 112. Plastocyanin-like domains are found at residues 65 to 183 (TVTQ…GPSS), 189 to 347 (DLGP…YDES), and 424 to 567 (YVDW…KIKP). Histidine 117, histidine 119, histidine 161, and histidine 163 together coordinate Cu cation. N-linked (GlcNAc...) asparagine glycans are attached at residues asparagine 278 and asparagine 467. Positions 484, 487, 489, 543, 544, 545, and 549 each coordinate Cu cation.

This sequence belongs to the multicopper oxidase family. Cu cation serves as cofactor.

The catalysed reaction is 2 dihydrogeodin + O2 + 2 H(+) = 2 (+)-geodin + 2 H2O. It functions in the pathway secondary metabolite biosynthesis. In terms of biological role, dihydrogeodin oxidase; part of the gene cluster that mediates the biosynthesis of geodin, an intermediate in the biosynthesis of other natural products. The pathway begins with the synthesis of atrochrysone thioester by the polyketide synthase (PKS) gedC. The atrochrysone carboxyl ACP thioesterase gedB then breaks the thioester bond and releases the atrochrysone carboxylic acid from gedC. The atrochrysone carboxylic acid is then converted to atrochrysone which is further transformed into emodinanthrone. The next step is performed by the emodinanthrone oxygenase gedH that catalyzes the oxidation of emodinanthrone to emodin. Emodin O-methyltransferase encoded probably by gedA then catalyzes methylation of the 8-hydroxy group of emodin to form questin. Ring cleavage of questin by questin oxidase gedK leads to desmethylsulochrin via several intermediates including questin epoxide. Another methylation step probably catalyzed by methyltransferase gedG leads to the formation of sulochrin which is further converted to dihydrogeodin by the sulochrin halogenase gedL. Finally, the dihydrogeodin oxidase gedJ catalyzes the stereospecific phenol oxidative coupling reaction converting dihydrogeodin to geodin. In Aspergillus terreus (strain NIH 2624 / FGSC A1156), this protein is Dihydrogeodin oxidase.